The sequence spans 83 residues: Large ribosomal subunit protein bL27 (83 aa).

This sequence belongs to the bacterial ribosomal protein bL27 family.

The protein is Large ribosomal subunit protein bL27 of Bifidobacterium adolescentis (strain ATCC 15703 / DSM 20083 / NCTC 11814 / E194a).